Here is a 345-residue protein sequence, read N- to C-terminus: Nicotinate-nucleotide--dimethylbenzimidazole phosphoribosyltransferase (345 aa).

Catalysis depends on Glu312, which acts as the Proton acceptor.

Belongs to the CobT family.

The enzyme catalyses 5,6-dimethylbenzimidazole + nicotinate beta-D-ribonucleotide = alpha-ribazole 5'-phosphate + nicotinate + H(+). Its pathway is nucleoside biosynthesis; alpha-ribazole biosynthesis; alpha-ribazole from 5,6-dimethylbenzimidazole: step 1/2. In terms of biological role, catalyzes the synthesis of alpha-ribazole-5'-phosphate from nicotinate mononucleotide (NAMN) and 5,6-dimethylbenzimidazole (DMB). In Phocaeicola vulgatus (strain ATCC 8482 / DSM 1447 / JCM 5826 / CCUG 4940 / NBRC 14291 / NCTC 11154) (Bacteroides vulgatus), this protein is Nicotinate-nucleotide--dimethylbenzimidazole phosphoribosyltransferase.